A 341-amino-acid chain; its full sequence is Terpene synthase 9 (341 aa).

Positions 81–86 (DDILDS) match the DDxx(x)D/E motif motif. An NDxxSxxxD/E motif motif is present at residues 222–230 (NDMASYCKE).

This sequence belongs to the terpene synthase family.

The enzyme catalyses (2E,6E)-farnesyl diphosphate = (1S,2S,4R)-beta-elemene + diphosphate. It catalyses the reaction (2E,6E)-farnesyl diphosphate = germacrene D + diphosphate. Terpene synthase that converts its substrate farnesyl diphosphate (FPP) into the sesquiterpenes beta-elemene, germacrene D and a yet unidentified sesquiterpene. This Dictyostelium purpureum (Slime mold) protein is Terpene synthase 9.